We begin with the raw amino-acid sequence, 101 residues long: Small ribosomal subunit protein uS14 (101 aa).

Belongs to the universal ribosomal protein uS14 family. As to quaternary structure, part of the 30S ribosomal subunit. Contacts proteins S3 and S10.

Functionally, binds 16S rRNA, required for the assembly of 30S particles and may also be responsible for determining the conformation of the 16S rRNA at the A site. The sequence is that of Small ribosomal subunit protein uS14 from Novosphingobium aromaticivorans (strain ATCC 700278 / DSM 12444 / CCUG 56034 / CIP 105152 / NBRC 16084 / F199).